We begin with the raw amino-acid sequence, 455 residues long: Ribosomal protein uS12 methylthiotransferase RimO (455 aa).

Residues Pro-10–Pro-120 form the MTTase N-terminal domain. Cys-19, Cys-55, Cys-84, Cys-151, Cys-155, and Cys-158 together coordinate [4Fe-4S] cluster. Positions Leu-137 to Ala-380 constitute a Radical SAM core domain. A TRAM domain is found at Glu-383–Thr-455.

The protein belongs to the methylthiotransferase family. RimO subfamily. [4Fe-4S] cluster is required as a cofactor.

The protein resides in the cytoplasm. It carries out the reaction L-aspartate(89)-[ribosomal protein uS12]-hydrogen + (sulfur carrier)-SH + AH2 + 2 S-adenosyl-L-methionine = 3-methylsulfanyl-L-aspartate(89)-[ribosomal protein uS12]-hydrogen + (sulfur carrier)-H + 5'-deoxyadenosine + L-methionine + A + S-adenosyl-L-homocysteine + 2 H(+). Its function is as follows. Catalyzes the methylthiolation of an aspartic acid residue of ribosomal protein uS12. In Sphingopyxis alaskensis (strain DSM 13593 / LMG 18877 / RB2256) (Sphingomonas alaskensis), this protein is Ribosomal protein uS12 methylthiotransferase RimO.